The chain runs to 639 residues: 2-oxoacid:ferredoxin oxidoreductase 1, subunit alpha (639 aa).

A YPITP motif motif is present at residues 266–270 (YPITP). Residues threonine 269 and arginine 352 each contribute to the substrate site.

In terms of assembly, heterodimer composed of an alpha and a beta subunit.

It carries out the reaction a 2-oxocarboxylate + 2 oxidized [2Fe-2S]-[ferredoxin] + CoA = an acyl-CoA + 2 reduced [2Fe-2S]-[ferredoxin] + CO2 + H(+). Its function is as follows. Catalyzes the coenzyme A-dependent oxidative decarboxylation of different 2-oxoacids such as pyruvate, 2-oxobutyrate and glyoxylate to form their CoA derivatives. This chain is 2-oxoacid:ferredoxin oxidoreductase 1, subunit alpha, found in Aeropyrum pernix (strain ATCC 700893 / DSM 11879 / JCM 9820 / NBRC 100138 / K1).